The chain runs to 369 residues: UDP-N-acetylglucosamine--N-acetylmuramyl-(pentapeptide) pyrophosphoryl-undecaprenol N-acetylglucosamine transferase (369 aa).

UDP-N-acetyl-alpha-D-glucosamine contacts are provided by residues 10–12 (TAG), Asn-124, Arg-161, Ser-195, and Gln-295.

The protein belongs to the glycosyltransferase 28 family. MurG subfamily.

The protein resides in the cell membrane. It catalyses the reaction di-trans,octa-cis-undecaprenyl diphospho-N-acetyl-alpha-D-muramoyl-L-alanyl-D-glutamyl-meso-2,6-diaminopimeloyl-D-alanyl-D-alanine + UDP-N-acetyl-alpha-D-glucosamine = di-trans,octa-cis-undecaprenyl diphospho-[N-acetyl-alpha-D-glucosaminyl-(1-&gt;4)]-N-acetyl-alpha-D-muramoyl-L-alanyl-D-glutamyl-meso-2,6-diaminopimeloyl-D-alanyl-D-alanine + UDP + H(+). It functions in the pathway cell wall biogenesis; peptidoglycan biosynthesis. Functionally, cell wall formation. Catalyzes the transfer of a GlcNAc subunit on undecaprenyl-pyrophosphoryl-MurNAc-pentapeptide (lipid intermediate I) to form undecaprenyl-pyrophosphoryl-MurNAc-(pentapeptide)GlcNAc (lipid intermediate II). In Acidothermus cellulolyticus (strain ATCC 43068 / DSM 8971 / 11B), this protein is UDP-N-acetylglucosamine--N-acetylmuramyl-(pentapeptide) pyrophosphoryl-undecaprenol N-acetylglucosamine transferase.